The chain runs to 860 residues: Receptor-like protein 31 (860 aa).

An N-terminal signal peptide occupies residues 1 to 23 (MMIPSQSCFCFFFMVSFFLHTLA). Residues 24 to 809 (SPTLRHCRHD…SEPEEHVINW (786 aa)) are Extracellular-facing. 10 N-linked (GlcNAc...) asparagine glycosylation sites follow: Asn-49, Asn-64, Asn-88, Asn-95, Asn-112, Asn-117, Asn-154, Asn-178, Asn-202, and Asn-213. LRR repeat units follow at residues 108-131 (QHLH…LGNL), 132-155 (FRLT…IGNL), 156-179 (SRLT…IGNL), 181-202 (QLEY…TFSN), 203-226 (LTKL…DMSG), and 227-251 (FQNL…LFTI). The stretch at 252-276 (PSLRWANLEGNMFKGPIEFRNMYSP) is one LRR 7; degenerate repeat. 14 LRR repeats span residues 277 to 301 (STRL…LSQY), 302 to 325 (LNLI…LFTI), 326 to 349 (PTLE…NMSS), 350 to 374 (SSSL…VSQY), 376 to 398 (NLEE…ISKL), 400 to 419 (KLEY…PSWL), 420 to 444 (WRLT…GLDE), 446 to 468 (QVQW…ICKL), 469 to 494 (RSLE…SFMV), 496 to 517 (LTDL…FVNA), 518 to 541 (TKLL…LIHC), 543 to 564 (AMQL…WLGS), 565 to 591 (LPSL…SIGF), and 592 to 615 (QSLR…YFSS). Asn-313, Asn-346, and Asn-364 each carry an N-linked (GlcNAc...) asparagine glycan. An N-linked (GlcNAc...) asparagine glycan is attached at Asn-429. 3 N-linked (GlcNAc...) asparagine glycosylation sites follow: Asn-482, Asn-503, and Asn-516. Residues Asn-642, Asn-673, and Asn-697 are each glycosylated (N-linked (GlcNAc...) asparagine). 4 LRR repeats span residues 665–690 (INEE…IGLL), 691–714 (KELR…LANL), 716–738 (KLEA…LGSL), and 740–763 (FMST…QFQG). 2 N-linked (GlcNAc...) asparagine glycosylation sites follow: Asn-745 and Asn-765. A helical membrane pass occupies residues 810–830 (IAAGIAYGPGVVCGLVIGHIF). Residues 831–860 (LSHKHECWFMEKFRRKKPKVVTRIARPSKH) lie on the Cytoplasmic side of the membrane.

Belongs to the RLP family.

It is found in the cell membrane. This Arabidopsis thaliana (Mouse-ear cress) protein is Receptor-like protein 31.